The sequence spans 234 residues: Ribosomal RNA small subunit methyltransferase G (234 aa).

Residues Gly-74, Phe-79, 125-126 (AE), and Arg-144 contribute to the S-adenosyl-L-methionine site.

The protein belongs to the methyltransferase superfamily. RNA methyltransferase RsmG family.

The protein resides in the cytoplasm. Specifically methylates the N7 position of a guanine in 16S rRNA. This is Ribosomal RNA small subunit methyltransferase G from Roseiflexus sp. (strain RS-1).